Here is a 566-residue protein sequence, read N- to C-terminus: Interleukin-1 receptor-like 1 (566 aa).

The first 26 residues, 1–26, serve as a signal peptide directing secretion; it reads MIGKWRMGLWALAILTVPMYFIVTEG. 3 consecutive Ig-like C2-type domains span residues 27-109, 120-207, and 217-323; these read RKTS…LNVT, PDYM…RSFT, and PVIT…VRLR. Over 27–331 the chain is Extracellular; sequence RKTSWGLENE…LRRKQPIDHQ (305 aa). Cysteines 42 and 93 form a disulfide. 3 N-linked (GlcNAc...) asparagine glycosylation sites follow: N107, N146, and N194. Disulfide bonds link C117–C157 and C139–C187. Residues 204–216 form a flexible linker region; it reads RSFTVEEKGFSTF. Residues N225, N258, and N277 are each glycosylated (N-linked (GlcNAc...) asparagine). Cystine bridges form between C240–C307 and C243–C286. A Glycyl lysine isopeptide (Lys-Gly) (interchain with G-Cter in ubiquitin) cross-link involves residue K325. Residues 332 to 354 form a helical membrane-spanning segment; that stretch reads STYYIVAGCSLLLMFINVLVIVL. Topologically, residues 355-566 are cytoplasmic; sequence KVFWIEVALF…GKVCLDLKHF (212 aa). Residues 379–539 form the TIR domain; sequence KLYDAYIIYP…KFWKHVRYQM (161 aa). S441 bears the Phosphoserine mark. Residue E465 is part of the active site.

The protein belongs to the interleukin-1 receptor family. Interacts with MYD88, IRAK1, IRAK4, and TRAF6. Bound to its ligand IL-33, interacts with IL1RAP to form the minimal interleukin-33 signaling complex with a 1:1:1 stoichiometry. Interacts with KIT (bound to KITLG/SCF). A mast cell-specific KITLG/SCF-induced interleukin-33 signaling complex contains IL1RL1, IL1RAP, KIT and MYD88. Interacts with TMED1. In terms of processing, phosphorylated by GSK3B at Ser-441; leading to proteasomal degradation. Ubiquitinated at Lys-325 in a FBXL19-mediated manner; leading to proteasomal degradation. Ubiquitination by TRAF6 via 'Lys-27'-linked polyubiquitination and deubiquitination by USP38 serves as a critical regulatory mechanism for fine-tuning IL1RL1-mediated inflammatory response. Isoform A is detected in spleen, lung, bone marrow and lymh node. Isoform B is predominant in fibroblasts.

The protein localises to the cell membrane. It localises to the secreted. The catalysed reaction is NAD(+) + H2O = ADP-D-ribose + nicotinamide + H(+). Its function is as follows. Receptor for interleukin-33 (IL-33) which plays crucial roles in innate and adaptive immunity, contributing to tissue homeostasis and responses to environmental stresses together with coreceptor IL1RAP. Its stimulation recruits MYD88, IRAK1, IRAK4, and TRAF6, followed by phosphorylation of MAPK3/ERK1 and/or MAPK1/ERK2, MAPK14, and MAPK8. Possibly involved in helper T-cell function. Upon tissue injury, induces UCP2-dependent mitochondrial rewiring that attenuates the generation of reactive oxygen species and preserves the integrity of Krebs cycle required for persistent production of itaconate and subsequent GATA3-dependent differentiation of inflammation-resolving alternatively activated macrophages. In terms of biological role, inhibits IL-33 signaling. This chain is Interleukin-1 receptor-like 1 (Il1rl1), found in Rattus norvegicus (Rat).